The sequence spans 180 residues: Zinc finger protein 740 (180 aa).

The span at 1 to 11 (MMLSQIASKQA) shows a compositional bias: polar residues. The tract at residues 1 to 62 (MMLSQIASKQ…KEDDSLAEAS (62 aa)) is disordered. Lys-9 participates in a covalent cross-link: Glycyl lysine isopeptide (Lys-Gly) (interchain with G-Cter in SUMO2). Ser-19 is subject to Phosphoserine. The segment covering 31-56 (CKPRFDLSSKGHRKDSDKSRNRKEDD) has biased composition (basic and acidic residues). 2 consecutive C2H2-type zinc fingers follow at residues 88–110 (FICEHCFGAFRSSYHLKRHVLIH) and 116–138 (FECDVCDMRFIQKYHLERHKRVH). The C2H2-type 3; atypical zinc-finger motif lies at 144–166 (YQCERCHQCFSRTDRLLRHKRMC).

This sequence belongs to the krueppel C2H2-type zinc-finger protein family.

Its subcellular location is the nucleus. In terms of biological role, may be involved in transcriptional regulation. In Mus musculus (Mouse), this protein is Zinc finger protein 740 (Znf740).